The sequence spans 305 residues: NAD kinase (305 aa).

The active-site Proton acceptor is Asp84. NAD(+) contacts are provided by residues 84–85, 159–160, His170, Arg187, Asp189, 200–205, and Gln260; these read DG, NE, and TAYSLS.

The protein belongs to the NAD kinase family. It depends on a divalent metal cation as a cofactor.

The protein resides in the cytoplasm. The enzyme catalyses NAD(+) + ATP = ADP + NADP(+) + H(+). In terms of biological role, involved in the regulation of the intracellular balance of NAD and NADP, and is a key enzyme in the biosynthesis of NADP. Catalyzes specifically the phosphorylation on 2'-hydroxyl of the adenosine moiety of NAD to yield NADP. The chain is NAD kinase from Pasteurella multocida (strain Pm70).